The primary structure comprises 808 residues: Phosphoinositide phosphatase SAC2 (808 aa).

Positions 158 to 551 (LCTVDLTKDF…GDTLALQYGG (394 aa)) constitute an SAC domain. The segment at 429–476 (FQNQNPSTLENDDGECSTYDPPSKDETAPNLVVENGNDSKDAKEDQQK) is disordered. Residues 465-476 (NDSKDAKEDQQK) are compositionally biased toward basic and acidic residues. A Phosphatase catalytic core motif is present at residues 487–498 (RTNCIDCLDRTN).

Component of the PI(3,5)P2 regulatory complex at least composed of ATG18, SAC/FIG4, FAB1 and VAC14. It depends on Mg(2+) as a cofactor. In terms of tissue distribution, ubiquitous with a higher level of expression in young seedlings than in other tissues.

It is found in the vacuole membrane. It carries out the reaction a 1,2-diacyl-sn-glycero-3-phospho-(1D-myo-inositol-3,5-bisphosphate) + H2O = a 1,2-diacyl-sn-glycero-3-phospho-(1D-myo-inositol-3-phosphate) + phosphate. Its function is as follows. The PI(3,5)P2 regulatory complex regulates both the synthesis and turnover of phosphatidylinositol 3,5-bisphosphate (PtdIns(3,5)P2). This is Phosphoinositide phosphatase SAC2 (SAC2) from Arabidopsis thaliana (Mouse-ear cress).